The following is a 316-amino-acid chain: Petrobactin import system permease protein YclN (316 aa).

The next 8 membrane-spanning stretches (helical) occupy residues 5–25 (YLFI…VEDL), 49–69 (LISI…MQQI), 94–114 (LLLF…VFAL), 133–153 (IFIP…ATFI), 181–201 (LLYL…KFTL), 224–244 (LIIV…LPFL), 268–288 (VLLG…IIFP), and 290–310 (EISI…FMLL).

This sequence belongs to the binding-protein-dependent transport system permease family. FecCD subfamily. As to quaternary structure, the complex is composed of two ATP-binding proteins (YclP), two transmembrane proteins (YclN and YclO) and a solute-binding protein (YclQ).

It is found in the cell membrane. In terms of biological role, part of the ABC transporter complex YclNOPQ involved in uptake of ferric-petrobactin. Petrobactin is a photoreactive 3,4-catecholate siderophore produced by many members of the B.cereus group, including B.anthracis. Probably responsible for the translocation of the substrate across the membrane. The chain is Petrobactin import system permease protein YclN (yclN) from Bacillus subtilis (strain 168).